An 81-amino-acid polypeptide reads, in one-letter code: Photosystem I iron-sulfur center (81 aa).

2 consecutive 4Fe-4S ferredoxin-type domains span residues 2 to 31 and 39 to 68; these read SHSV…MIPW and IASA…VRVY. Cys11, Cys14, Cys17, Cys21, Cys48, Cys51, Cys54, and Cys58 together coordinate [4Fe-4S] cluster.

As to quaternary structure, the eukaryotic PSI reaction center is composed of at least 11 subunits. [4Fe-4S] cluster serves as cofactor.

The protein localises to the plastid. The protein resides in the chloroplast thylakoid membrane. The catalysed reaction is reduced [plastocyanin] + hnu + oxidized [2Fe-2S]-[ferredoxin] = oxidized [plastocyanin] + reduced [2Fe-2S]-[ferredoxin]. Apoprotein for the two 4Fe-4S centers FA and FB of photosystem I (PSI); essential for photochemical activity. FB is the terminal electron acceptor of PSI, donating electrons to ferredoxin. The C-terminus interacts with PsaA/B/D and helps assemble the protein into the PSI complex. Required for binding of PsaD and PsaE to PSI. PSI is a plastocyanin-ferredoxin oxidoreductase, converting photonic excitation into a charge separation, which transfers an electron from the donor P700 chlorophyll pair to the spectroscopically characterized acceptors A0, A1, FX, FA and FB in turn. In Arabis hirsuta (Hairy rock-cress), this protein is Photosystem I iron-sulfur center.